A 58-amino-acid polypeptide reads, in one-letter code: Isocitrate lyase (58 aa).

This sequence belongs to the isocitrate lyase/PEP mutase superfamily. Isocitrate lyase family. Homotetramer. The cofactor is Mg(2+).

It localises to the glyoxysome. The catalysed reaction is D-threo-isocitrate = glyoxylate + succinate. It participates in carbohydrate metabolism; glyoxylate cycle; (S)-malate from isocitrate: step 1/2. Involved in storage lipid mobilization during the growth of higher plant seedling. The polypeptide is Isocitrate lyase (Helianthus annuus (Common sunflower)).